A 210-amino-acid chain; its full sequence is Proteasome subunit beta (210 aa).

A propeptide spans 1–9 (MDNDKYLKG) (removed in mature form; by autocatalysis). Threonine 10 acts as the Nucleophile in catalysis.

Belongs to the peptidase T1B family. As to quaternary structure, the 20S proteasome core is composed of 14 alpha and 14 beta subunits that assemble into four stacked heptameric rings, resulting in a barrel-shaped structure. The two inner rings, each composed of seven catalytic beta subunits, are sandwiched by two outer rings, each composed of seven alpha subunits. The catalytic chamber with the active sites is on the inside of the barrel. Has a gated structure, the ends of the cylinder being occluded by the N-termini of the alpha-subunits. Is capped at one or both ends by the proteasome regulatory ATPase, PAN.

Its subcellular location is the cytoplasm. The enzyme catalyses Cleavage of peptide bonds with very broad specificity.. With respect to regulation, the formation of the proteasomal ATPase PAN-20S proteasome complex, via the docking of the C-termini of PAN into the intersubunit pockets in the alpha-rings, triggers opening of the gate for substrate entry. Interconversion between the open-gate and close-gate conformations leads to a dynamic regulation of the 20S proteasome proteolysis activity. In terms of biological role, component of the proteasome core, a large protease complex with broad specificity involved in protein degradation. The polypeptide is Proteasome subunit beta (Methanosarcina mazei (strain ATCC BAA-159 / DSM 3647 / Goe1 / Go1 / JCM 11833 / OCM 88) (Methanosarcina frisia)).